Reading from the N-terminus, the 365-residue chain is Peptide chain release factor 2 (365 aa).

At glutamine 251 the chain carries N5-methylglutamine.

It belongs to the prokaryotic/mitochondrial release factor family. In terms of processing, methylated by PrmC. Methylation increases the termination efficiency of RF2.

It localises to the cytoplasm. Its function is as follows. Peptide chain release factor 2 directs the termination of translation in response to the peptide chain termination codons UGA and UAA. This is Peptide chain release factor 2 from Campylobacter jejuni subsp. doylei (strain ATCC BAA-1458 / RM4099 / 269.97).